Reading from the N-terminus, the 303-residue chain is Mitochondrial carrier homolog 2 (303 aa).

Residue Ala-2 is modified to N-acetylalanine. Over 2 to 15 (ADAASQVLLGSGLT) the chain is Mitochondrial intermembrane. 2 Solcar repeats span residues 2 to 98 (ADAA…YQEC) and 118 to 206 (DRVI…VNTY). A helical membrane pass occupies residues 16–36 (ILSQPLMYVKVLIQVGYEPLA). The Cytoplasmic segment spans residues 37–77 (PTVGRNIFGRQVCQLPGLFCYAQHIASIDGKRGLFTGLTPR). The helical transmembrane segment at 78 to 92 (LCSGVLGTVVHGKVL) threads the bilayer. At 93 to 135 (QHYQECDKAEESGSGNVQKEVSSSFDRVIKETTREMMARSAAT) the chain is on the mitochondrial intermembrane side. A helical transmembrane segment spans residues 136–156 (LITHPFHVITLRSMVQFIGRE). Residues 157 to 180 (SKYCGLCDSIATIYREEGILGFFA) lie on the Cytoplasmic side of the membrane. Residues 181-199 (GLIPRLLGDIISLWLCNSL) traverse the membrane as a helical segment. The Mitochondrial intermembrane portion of the chain corresponds to 200–231 (AYLVNTYALDSGVSTMNEMKSYSQAVTGFFAS). The helical transmembrane segment at 232-252 (MLTYPFVLVSNLMAVNNCGLA) threads the bilayer. Residues 253–280 (GGCPPYAPIYSSWIDCWCMLQKEGNMSR) lie on the Cytoplasmic side of the membrane. The chain crosses the membrane as a helical span at residues 281–303 (GNSLFFRKVPFGKTYCCDLRMLI).

It belongs to the mitochondrial carrier (TC 2.A.29) family. In terms of assembly, interacts with p15BID.

The protein resides in the mitochondrion outer membrane. Functionally, protein insertase that mediates insertion of transmembrane proteins into the mitochondrial outer membrane. Catalyzes insertion of proteins with alpha-helical transmembrane regions, such as signal-anchored, tail-anchored and multi-pass membrane proteins. Does not mediate insertion of beta-barrel transmembrane proteins. Also acts as a receptor for the truncated form of pro-apoptotic BH3-interacting domain death agonist (p15 BID) and has therefore a critical function in apoptosis. Regulates the quiescence/cycling of hematopoietic stem cells (HSCs). Acts as a regulator of mitochondrial fusion, essential for the naive-to-primed interconversion of embryonic stem cells (ESCs). Acts as a regulator of lipid homeostasis and has a regulatory role in adipocyte differentiation and biology. The polypeptide is Mitochondrial carrier homolog 2 (MTCH2) (Bos taurus (Bovine)).